A 148-amino-acid polypeptide reads, in one-letter code: Putative ankyrin repeat protein RF_1158 (148 aa).

Residues 82-115 form an ANK repeat; that stretch reads RPTTALGIAIAQGNSEEVIKYLLANGADPKLAFD.

The protein is Putative ankyrin repeat protein RF_1158 of Rickettsia felis (strain ATCC VR-1525 / URRWXCal2) (Rickettsia azadi).